We begin with the raw amino-acid sequence, 135 residues long: Small ribosomal subunit protein bS16 (135 aa).

The tract at residues 106-135 is disordered; the sequence is TERRQKRLVVKSRRRQAKKEAEGKAAGAEA. Basic residues predominate over residues 109–122; that stretch reads RQKRLVVKSRRRQA.

It belongs to the bacterial ribosomal protein bS16 family.

The sequence is that of Small ribosomal subunit protein bS16 from Chlorobium phaeobacteroides (strain DSM 266 / SMG 266 / 2430).